Here is a 441-residue protein sequence, read N- to C-terminus: Proline--tRNA ligase (441 aa).

This sequence belongs to the class-II aminoacyl-tRNA synthetase family. ProS type 2 subfamily. As to quaternary structure, homodimer.

It localises to the cytoplasm. It carries out the reaction tRNA(Pro) + L-proline + ATP = L-prolyl-tRNA(Pro) + AMP + diphosphate. Its function is as follows. Catalyzes the attachment of proline to tRNA(Pro) in a two-step reaction: proline is first activated by ATP to form Pro-AMP and then transferred to the acceptor end of tRNA(Pro). The chain is Proline--tRNA ligase from Methylorubrum populi (strain ATCC BAA-705 / NCIMB 13946 / BJ001) (Methylobacterium populi).